A 208-amino-acid polypeptide reads, in one-letter code: Large ribosomal subunit protein uL4 (208 aa).

Residues 45 to 95 (RQGTHKAKTRSEVRGGGKKPFRQKGTGNARQGSSRSPIHVGGGTIFGPQPH) form a disordered region. The span at 69–80 (GTGNARQGSSRS) shows a compositional bias: polar residues.

It belongs to the universal ribosomal protein uL4 family. Part of the 50S ribosomal subunit.

Functionally, one of the primary rRNA binding proteins, this protein initially binds near the 5'-end of the 23S rRNA. It is important during the early stages of 50S assembly. It makes multiple contacts with different domains of the 23S rRNA in the assembled 50S subunit and ribosome. Forms part of the polypeptide exit tunnel. The sequence is that of Large ribosomal subunit protein uL4 from Chlorobium chlorochromatii (strain CaD3).